Here is a 241-residue protein sequence, read N- to C-terminus: Adapter protein MecA (241 aa).

Positions 77-102 (KNTDEDDVADESQGDASVDSEHPDQV) are disordered. Residues 80-89 (DEDDVADESQ) show a composition bias toward acidic residues.

This sequence belongs to the MecA family. Homodimer.

Its function is as follows. Enables the recognition and targeting of unfolded and aggregated proteins to the ClpC protease or to other proteins involved in proteolysis. This Levilactobacillus brevis (strain ATCC 367 / BCRC 12310 / CIP 105137 / JCM 1170 / LMG 11437 / NCIMB 947 / NCTC 947) (Lactobacillus brevis) protein is Adapter protein MecA.